The chain runs to 97 residues: MSRLFVKRLPTGSFLMLLLYIGLLLSAIAVAYSTYWNRQLLNSLYSELSVRDKAQAEWGRLILEQSTWTAHSRIESLAVEQLRMRVPDPAEVRMVAP.

Topologically, residues 1-11 (MSRLFVKRLPT) are cytoplasmic. Residues 12 to 32 (GSFLMLLLYIGLLLSAIAVAY) traverse the membrane as a helical segment. Over 33-97 (STYWNRQLLN…DPAEVRMVAP (65 aa)) the chain is Periplasmic.

The protein belongs to the FtsL family. Part of a complex composed of FtsB, FtsL and FtsQ.

It is found in the cell inner membrane. In terms of biological role, essential cell division protein. May link together the upstream cell division proteins, which are predominantly cytoplasmic, with the downstream cell division proteins, which are predominantly periplasmic. The sequence is that of Cell division protein FtsL from Pseudomonas aeruginosa (strain ATCC 15692 / DSM 22644 / CIP 104116 / JCM 14847 / LMG 12228 / 1C / PRS 101 / PAO1).